Reading from the N-terminus, the 434-residue chain is Potassium/proton antiporter CemA (434 aa).

5 helical membrane passes run 75-95 (LLEYKLSLWLIQLFLIFSLFF), 210-230 (LASLQYIGCLFFIPLGVSFFF), 311-331 (IVLHLLTDLIWFITLSCLFIL), 359-379 (ILLLTDLCIGFHSPHGWEIVI), and 395-415 (ISCFVSTFPVILDTVFKYLIF).

It belongs to the CemA family.

It localises to the plastid. The protein localises to the chloroplast inner membrane. It catalyses the reaction K(+)(in) + H(+)(out) = K(+)(out) + H(+)(in). In terms of biological role, contributes to K(+)/H(+) antiport activity by supporting proton efflux to control proton extrusion and homeostasis in chloroplasts in a light-dependent manner to modulate photosynthesis. Prevents excessive induction of non-photochemical quenching (NPQ) under continuous-light conditions. Indirectly promotes efficient inorganic carbon uptake into chloroplasts. The protein is Potassium/proton antiporter CemA of Marchantia polymorpha (Common liverwort).